A 318-amino-acid chain; its full sequence is Ankyrin repeat and SOCS box protein 7 (318 aa).

ANK repeat units follow at residues 13–42 (QEES…SPNG), 46–75 (NGWT…DPTV), 80–109 (GGFT…RSDI), 116–145 (DGWT…EVDP), 149–178 (KGTT…NIDI), 180–208 (NGFL…DTNL), and 213–242 (DGQT…DTNT). The SOCS box domain occupies 265-318 (LDFLQEVTRQPRNLQDLCRIKIRQCIGLQNLKLLDELPIAKVMKDYLKHKSDDI).

This sequence belongs to the ankyrin SOCS box (ASB) family. As to quaternary structure, interacts with CUL5. Interacts with RNF7. Interacts with PSRC1.

It functions in the pathway protein modification; protein ubiquitination. In terms of biological role, probable substrate-recognition component of a SCF-like ECS (Elongin-Cullin-SOCS-box protein) E3 ubiquitin-protein ligase complex which mediates the ubiquitination and subsequent proteasomal degradation of target proteins. Plays a role in spindle dynamics and genome integrity by targeting the mitotic progression protein PSRC1 for proteasomal degradation in a cell cycle-dependent manner. Also participates in meiosis by mediating the proper attachment between kinetochores and microtubules. This is Ankyrin repeat and SOCS box protein 7 (ASB7) from Pongo abelii (Sumatran orangutan).